A 396-amino-acid polypeptide reads, in one-letter code: Acetate kinase (396 aa).

N8 contacts Mg(2+). K15 contributes to the ATP binding site. Residue R89 participates in substrate binding. The active-site Proton donor/acceptor is the D146. ATP is bound by residues 206 to 210, 281 to 283, and 329 to 333; these read HLGNG, DLR, and GIGEN. A Mg(2+)-binding site is contributed by E382.

Belongs to the acetokinase family. In terms of assembly, homodimer. It depends on Mg(2+) as a cofactor. Requires Mn(2+) as cofactor.

It is found in the cytoplasm. It carries out the reaction acetate + ATP = acetyl phosphate + ADP. Its pathway is metabolic intermediate biosynthesis; acetyl-CoA biosynthesis; acetyl-CoA from acetate: step 1/2. Its function is as follows. Catalyzes the formation of acetyl phosphate from acetate and ATP. Can also catalyze the reverse reaction. The polypeptide is Acetate kinase (Geobacillus kaustophilus (strain HTA426)).